The sequence spans 439 residues: Taxadien-5-alpha-ol O-acetyltransferase (439 aa).

Active-site proton acceptor residues include His164 and Asp373.

It belongs to the plant acyltransferase family.

It catalyses the reaction taxa-4(20),11-dien-5alpha-ol + acetyl-CoA = taxa-4(20),11-dien-5alpha-yl acetate + CoA. The protein operates within alkaloid biosynthesis; taxol biosynthesis; 10-deacetyl-2-debenzoylbaccatin III from taxa-4(20),11-dien-5alpha-ol: step 1/3. In Taxus chinensis (Chinese yew), this protein is Taxadien-5-alpha-ol O-acetyltransferase.